The primary structure comprises 1475 residues: Mediator of RNA polymerase II transcription subunit 1 (1475 aa).

Residues 1–10 (MSGSNAKSSG) are compositionally biased toward polar residues. 7 disordered regions span residues 1–26 (MSGSNAKSSGTGFGSHIPSIEEKNKQ), 616–644 (ETDPQSGSSASGTTVSGSSSSSGSAKTSD), 709–992 (GVTA…VASG), 1135–1166 (QPQPGAAPTSSCLTTSGGSSDSAGSINPAGAS), 1184–1245 (NKTG…SKKA), 1263–1354 (KANS…RFDH), and 1387–1475 (PKLS…LAGE). 3 stretches are compositionally biased toward low complexity: residues 621–641 (SGSSASGTTVSGSSSSSGSAK), 711–729 (TASSSATPTTITITPITGK), and 738–782 (KSTA…SGSS). A phosphoserine mark is found at Ser-830, Ser-834, Ser-854, and Ser-858. Composition is skewed to polar residues over residues 860–874 (VYSSPKHNTASNSPK) and 888–897 (GKPSMSTLKS). Positions 919-934 (TSSGPSASSGSSGATG) are enriched in low complexity. Residues 944-953 (APPPPPPIPP) are compositionally biased toward pro residues. Composition is skewed to low complexity over residues 954–966 (LASSSGSISSSQS), 973–989 (SSASGSSSTSSSATAGV), 1143–1159 (TSSCLTTSGGSSDSAGS), 1185–1225 (KTGS…TGST), and 1265–1276 (NSSGNLSSKLSG). Polar residues predominate over residues 1286–1296 (TKSNSTNSFQE). Low complexity-rich tracts occupy residues 1334–1346 (SGSVSPALSGSMS) and 1399–1409 (TSGRSTPSGSS). 2 stretches are compositionally biased toward polar residues: residues 1415–1430 (GTSSSILGPIASSTGL) and 1442–1458 (SQSGNEGLLNLSSTAGT).

This sequence belongs to the Mediator complex subunit 1 family. In terms of assembly, component of the Mediator complex.

Its subcellular location is the nucleus. Component of the Mediator complex, a coactivator involved in the regulated transcription of nearly all RNA polymerase II-dependent genes. Mediator functions as a bridge to convey information from gene-specific regulatory proteins to the basal RNA polymerase II transcription machinery. Mediator is recruited to promoters by direct interactions with regulatory proteins and serves as a scaffold for the assembly of a functional preinitiation complex with RNA polymerase II and the general transcription factors. Required for activated transcription of the MtnA, MtnB and MtnD genes. The protein is Mediator of RNA polymerase II transcription subunit 1 (MED1) of Drosophila melanogaster (Fruit fly).